The following is a 554-amino-acid chain: Membrane protein insertase YidC (554 aa).

5 consecutive transmembrane segments (helical) span residues 7 to 24 (VLWV…DNWQ), 362 to 382 (VVGN…AVFF), 436 to 456 (LPVV…LASV), 475 to 495 (PFFI…SLNP), and 510 to 530 (PIAF…YYVV).

Belongs to the OXA1/ALB3/YidC family. Type 1 subfamily. As to quaternary structure, interacts with the Sec translocase complex via SecD. Specifically interacts with transmembrane segments of nascent integral membrane proteins during membrane integration.

It localises to the cell inner membrane. Functionally, required for the insertion and/or proper folding and/or complex formation of integral membrane proteins into the membrane. Involved in integration of membrane proteins that insert both dependently and independently of the Sec translocase complex, as well as at least some lipoproteins. Aids folding of multispanning membrane proteins. The chain is Membrane protein insertase YidC from Burkholderia vietnamiensis (strain G4 / LMG 22486) (Burkholderia cepacia (strain R1808)).